The primary structure comprises 216 residues: MGQKINPLGFRLGTTQDHHSLWFSQPKNYSESLQEDKKIRDFINNYVKKNMRKASGAEGIARISIQKRIDLIQVVIFMGFPKFLIETRPQGIEELQRTLQKEFNCGNQKLNITITRIEKPYGNPNILAEFIAVQLKNRVSFRKAIKKAIELAEQADTKGIQVQIAGRIDGKEIARVEWIREGRVPRQTIRANLDYSSYPVRTIYGVLGIKIWIFID.

In terms of domain architecture, KH type-2 spans 43-118; sequence INNYVKKNMR…KLNITITRIE (76 aa).

This sequence belongs to the universal ribosomal protein uS3 family. In terms of assembly, part of the 30S ribosomal subunit.

It is found in the plastid. The protein is Small ribosomal subunit protein uS3c (rps3) of Cuscuta reflexa (Southern Asian dodder).